A 121-amino-acid chain; its full sequence is Aspartate 1-decarboxylase (121 aa).

Serine 25 acts as the Schiff-base intermediate with substrate; via pyruvic acid in catalysis. Position 25 is a pyruvic acid (Ser) (serine 25). Threonine 57 serves as a coordination point for substrate. Catalysis depends on tyrosine 58, which acts as the Proton donor. Residue 73–75 participates in substrate binding; the sequence is GAA.

Belongs to the PanD family. In terms of assembly, heterooctamer of four alpha and four beta subunits. The cofactor is pyruvate. Is synthesized initially as an inactive proenzyme, which is activated by self-cleavage at a specific serine bond to produce a beta-subunit with a hydroxyl group at its C-terminus and an alpha-subunit with a pyruvoyl group at its N-terminus.

The protein resides in the cytoplasm. The enzyme catalyses L-aspartate + H(+) = beta-alanine + CO2. It functions in the pathway cofactor biosynthesis; (R)-pantothenate biosynthesis; beta-alanine from L-aspartate: step 1/1. Its function is as follows. Catalyzes the pyruvoyl-dependent decarboxylation of aspartate to produce beta-alanine. The protein is Aspartate 1-decarboxylase of Maricaulis maris (strain MCS10) (Caulobacter maris).